Here is a 467-residue protein sequence, read N- to C-terminus: Ribulose bisphosphate carboxylase large chain (467 aa).

Residue lysine 6 is modified to N6,N6,N6-trimethyllysine. 2 residues coordinate substrate: asparagine 115 and threonine 165. The Proton acceptor role is filled by lysine 167. Substrate is bound at residue lysine 169. Mg(2+) is bound by residues lysine 193, aspartate 195, and glutamate 196. Lysine 193 is modified (N6-carboxylysine). Histidine 286 functions as the Proton acceptor in the catalytic mechanism. Substrate contacts are provided by arginine 287, histidine 319, and serine 371.

The protein belongs to the RuBisCO large chain family. Type I subfamily. In terms of assembly, heterohexadecamer of 8 large chains and 8 small chains; disulfide-linked. The disulfide link is formed within the large subunit homodimers. Requires Mg(2+) as cofactor. Post-translationally, the disulfide bond which can form in the large chain dimeric partners within the hexadecamer appears to be associated with oxidative stress and protein turnover.

It is found in the plastid. The protein resides in the chloroplast. The enzyme catalyses 2 (2R)-3-phosphoglycerate + 2 H(+) = D-ribulose 1,5-bisphosphate + CO2 + H2O. It catalyses the reaction D-ribulose 1,5-bisphosphate + O2 = 2-phosphoglycolate + (2R)-3-phosphoglycerate + 2 H(+). RuBisCO catalyzes two reactions: the carboxylation of D-ribulose 1,5-bisphosphate, the primary event in carbon dioxide fixation, as well as the oxidative fragmentation of the pentose substrate in the photorespiration process. Both reactions occur simultaneously and in competition at the same active site. This Cedrus atlantica (Atlas cedar) protein is Ribulose bisphosphate carboxylase large chain.